The primary structure comprises 122 residues: Ribosome-binding factor A (122 aa).

This sequence belongs to the RbfA family. Monomer. Binds 30S ribosomal subunits, but not 50S ribosomal subunits or 70S ribosomes.

Its subcellular location is the cytoplasm. Functionally, one of several proteins that assist in the late maturation steps of the functional core of the 30S ribosomal subunit. Associates with free 30S ribosomal subunits (but not with 30S subunits that are part of 70S ribosomes or polysomes). Required for efficient processing of 16S rRNA. May interact with the 5'-terminal helix region of 16S rRNA. The polypeptide is Ribosome-binding factor A (Cupriavidus necator (strain ATCC 17699 / DSM 428 / KCTC 22496 / NCIMB 10442 / H16 / Stanier 337) (Ralstonia eutropha)).